The chain runs to 66 residues: Large ribosomal subunit protein bL35 (66 aa).

The segment at 21–40 is disordered; sequence KIKSTQSAKRHGMTKRSKRS. Residues 28–40 show a composition bias toward basic residues; sequence AKRHGMTKRSKRS.

The protein belongs to the bacterial ribosomal protein bL35 family.

In Ehrlichia canis (strain Jake), this protein is Large ribosomal subunit protein bL35.